The chain runs to 182 residues: MTTNSWHSILVIYLASLALDWSLEMGIHLEKSAYLALAGNFLRSNELSKVIDVVKEMVKSQHSLGVYHGAMLIHMLGFGRRPSLAAEALDLLPDDQKGLSAYTALMDVYISAGSPEKAMKILGEMREREIMPSLGTYDVLLSGLEKTSDFQRETSSLRKEQKSLVASTRFREIVHVEDKICM.

PPR repeat units follow at residues 30-64 (EKSA…QHSL), 65-95 (GVYH…LPDD), and 98-132 (GLSA…EIMP).

Belongs to the PPR family. P subfamily.

This is Pentatricopeptide repeat-containing protein At2g01360 from Arabidopsis thaliana (Mouse-ear cress).